The chain runs to 759 residues: Protein YdeP (759 aa).

[4Fe-4S] cluster-binding residues include C49 and C52.

This sequence belongs to the prokaryotic molybdopterin-containing oxidoreductase family. [4Fe-4S] cluster serves as cofactor. Requires Mo-bis(molybdopterin guanine dinucleotide) as cofactor.

Functionally, probably involved in acid resistance. The polypeptide is Protein YdeP (ydeP) (Shigella flexneri).